Reading from the N-terminus, the 410-residue chain is Cytochrome P450(MEG) (410 aa).

Position 355 (Cys355) interacts with heme.

It belongs to the cytochrome P450 family. Requires heme as cofactor.

The protein resides in the cytoplasm. The catalysed reaction is reduced 2[4Fe-4S]-[ferredoxin] + progesterone + O2 + 2 H(+) = 15beta-hydroxyprogesterone + oxidized 2[4Fe-4S]-[ferredoxin] + H2O. Its function is as follows. Has the capacity to hydroxylate certain steroids in the 15-beta position. Also hydroxylates progesterone in the 11-alpha and 9-beta position. The polypeptide is Cytochrome P450(MEG) (cyp106A2) (Priestia megaterium (Bacillus megaterium)).